The sequence spans 453 residues: L-cysteine:1D-myo-inositol 2-amino-2-deoxy-alpha-D-glucopyranoside ligase (453 aa).

Cysteine 58 is a binding site for Zn(2+). L-cysteinyl-5'-AMP contacts are provided by residues cysteine 58 to threonine 61, threonine 73, and asparagine 96 to threonine 98. The 'HIGH' region signature appears at isoleucine 60–histidine 70. Positions glutamate 221–proline 226 match the 'ERGGDP' region motif. Tryptophan 262 provides a ligand contact to L-cysteinyl-5'-AMP. Cysteine 266 contributes to the Zn(2+) binding site. Glycine 284–aspartate 286 provides a ligand contact to L-cysteinyl-5'-AMP. Zn(2+) is bound at residue histidine 291. Position 317 (valine 317) interacts with L-cysteinyl-5'-AMP. The 'KMSKS' region signature appears at lysine 323–serine 327.

It belongs to the class-I aminoacyl-tRNA synthetase family. MshC subfamily. Monomer. The cofactor is Zn(2+).

The enzyme catalyses 1D-myo-inositol 2-amino-2-deoxy-alpha-D-glucopyranoside + L-cysteine + ATP = 1D-myo-inositol 2-(L-cysteinylamino)-2-deoxy-alpha-D-glucopyranoside + AMP + diphosphate + H(+). Its function is as follows. Catalyzes the ATP-dependent condensation of GlcN-Ins and L-cysteine to form L-Cys-GlcN-Ins. This chain is L-cysteine:1D-myo-inositol 2-amino-2-deoxy-alpha-D-glucopyranoside ligase, found in Rothia mucilaginosa (strain DY-18) (Stomatococcus mucilaginosus).